Here is a 295-residue protein sequence, read N- to C-terminus: Ribosomal protein L11 methyltransferase (295 aa).

Thr-150, Gly-171, Asp-193, and Asn-232 together coordinate S-adenosyl-L-methionine.

Belongs to the methyltransferase superfamily. PrmA family.

The protein resides in the cytoplasm. The catalysed reaction is L-lysyl-[protein] + 3 S-adenosyl-L-methionine = N(6),N(6),N(6)-trimethyl-L-lysyl-[protein] + 3 S-adenosyl-L-homocysteine + 3 H(+). In terms of biological role, methylates ribosomal protein L11. The polypeptide is Ribosomal protein L11 methyltransferase (Neisseria meningitidis serogroup B (strain ATCC BAA-335 / MC58)).